A 103-amino-acid polypeptide reads, in one-letter code: Large ribosomal subunit protein bL21 (103 aa).

It belongs to the bacterial ribosomal protein bL21 family. In terms of assembly, part of the 50S ribosomal subunit. Contacts protein L20.

Its function is as follows. This protein binds to 23S rRNA in the presence of protein L20. In Cupriavidus metallidurans (strain ATCC 43123 / DSM 2839 / NBRC 102507 / CH34) (Ralstonia metallidurans), this protein is Large ribosomal subunit protein bL21.